A 287-amino-acid chain; its full sequence is MTDSTLHLLKAFFLGIVEGLTEFIPVSSTGHLIVIGDWINFASSSGKVFEVVIQFGSILAVMWIFRARLWQLIRGTLTGVRQEVNFTRNLLLAFLPAAVIGAIFIKSIKQVFYHPGVVAVTLVVGGFIMLWVERRAPHTPGDAPGAADDTASDERASAHTLEQISAKQALGVGVAQCVAMIPGVSRSGATIIGGMIAGIQRKTATEFSFFLAMPTMLGAAVYDLYRNIGLLSQHDMSAIAVGFVAAFLSALVVVRAVLRFVANHTYRVFAWYRIALGLVVAAWIYAK.

7 consecutive transmembrane segments (helical) span residues 6–26, 45–65, 89–109, 111–131, 204–224, 238–258, and 266–286; these read LHLL…FIPV, SGKV…MWIF, NLLL…KSIK, VFYH…IMLW, ATEF…VYDL, AIAV…RAVL, and YRVF…WIYA.

Belongs to the UppP family.

It is found in the cell inner membrane. The enzyme catalyses di-trans,octa-cis-undecaprenyl diphosphate + H2O = di-trans,octa-cis-undecaprenyl phosphate + phosphate + H(+). In terms of biological role, catalyzes the dephosphorylation of undecaprenyl diphosphate (UPP). Confers resistance to bacitracin. This is Undecaprenyl-diphosphatase from Bordetella pertussis (strain Tohama I / ATCC BAA-589 / NCTC 13251).